The following is a 485-amino-acid chain: uncharacterized protein (485 aa).

It is found in the virion. This is an uncharacterized protein from Acanthamoeba polyphaga mimivirus (APMV).